The following is a 340-amino-acid chain: MAQYKGAASEAGRAMQLMKKREKQREQLEQMKLKIAEENVVKANINKKFSAHYDAVEAELKSSTVGLVTLNDMKAKQEALVKEREKQLAKKEQFKDLQLMLEKQRERERKKEQKRKIASLSFNLEEDEECEDEEGEEEESDKEDPPEEKKKKKKKKLGKNPDVDTSFLPDRDREEEENRLREELRQEWEHKQEKIKSEEIEITFSYWDGSGHRRTVKMKKGNSIQQFLQKALESLRKDFSELRSAGVEQLMYIKEDLIIPHHHSFYDFIVTKARGKSGPLFNFDVHEDVRLLSDATVEKDESHAGKVVLRSWYEKNKHIFPASRWEPYDPEKKWDKYTIR.

Disordered stretches follow at residues 1-22 and 123-178; these read MAQY…KKRE and NLEE…EEEN. Residues 124-146 are compositionally biased toward acidic residues; it reads LEEDEECEDEEGEEEESDKEDPP. The segment covering 169–178 has biased composition (basic and acidic residues); sequence PDRDREEEEN.

Its subcellular location is the nucleus. Functionally, probably involved in the regulation of pre-mRNA splicing. The polypeptide is Protein FAM50A-A (fam50a-a) (Xenopus laevis (African clawed frog)).